The following is a 329-amino-acid chain: ARTTAPSVYPLVPGCSGTSGSLVTLGCLVKGYFPEPVTVKWNSGALSSGVHTFPAVLQSGLYTLSSSVTVPSSTWSSQTVTCSVAHPATKSNLIKRIEPRRPKPRPPTDICSCDDNLGRPSVFIFPPKPKDILMITLTPKVTCVVVDVSEEEPDVQFSWFVDNVRVFTAQTQPHEEQLNGTFRVVSTLHIQHQDWMSGKEFKCKVNNKDLPSPIEKTISKPRGKARTPQVYTIPPPREQMSKNKVSLTCMVTSFYPASISVEWERNGELEQDYKNTLPVLDSDESYFLYSKLSVDTDSWMRGDIYTCSVVHEALHNHHTQKNLSRSPGK.

A CH1 region spans residues Ala-1–Ile-97. Cysteines 27 and 82 form a disulfide. The interval Glu-98 to Cys-113 is hinge. The CH2 stretch occupies residues Asp-114 to Arg-222. Intrachain disulfides connect Cys-143-Cys-203 and Cys-249-Cys-307. The interval Gly-223–Lys-329 is CH3.

The protein is Ig gamma-2C chain C region of Rattus norvegicus (Rat).